A 525-amino-acid chain; its full sequence is AarF domain-containing protein kinase 1 (525 aa).

One can recognise a Protein kinase domain in the interval 148 to 477 (SFDDTPLGAA…HKKRDAGSFF (330 aa)). Residues 154–162 (LGAASLAQV) and K176 contribute to the ATP site. The Proton acceptor role is filled by D308.

It belongs to the protein kinase superfamily. ADCK protein kinase family.

The protein localises to the mitochondrion. In terms of biological role, appears to be essential for maintaining mitochondrial cristae formation and mitochondrial function by acting via YME1L1 in a kinase-independent manner to regulate essential mitochondrial structural proteins OPA1 and IMMT. The action of this enzyme is not yet clear. It is not known if it has protein kinase activity and what type of substrate it would phosphorylate (Ser, Thr or Tyr). This is AarF domain-containing protein kinase 1 (Adck1) from Mus musculus (Mouse).